Here is a 287-residue protein sequence, read N- to C-terminus: Glutamate racemase (287 aa).

The span at 1 to 15 shows a compositional bias: polar residues; it reads MATKPQDANTTSREA. Residues 1–25 are disordered; the sequence is MATKPQDANTTSREAITSKADSPPR. Substrate-binding positions include 32–33 and 64–65; these read DS and YG. The active-site Proton donor/acceptor is C96. 97–98 is a substrate binding site; the sequence is NT. Catalysis depends on C208, which acts as the Proton donor/acceptor. 209-210 lines the substrate pocket; the sequence is TH.

This sequence belongs to the aspartate/glutamate racemases family.

It catalyses the reaction L-glutamate = D-glutamate. It functions in the pathway cell wall biogenesis; peptidoglycan biosynthesis. Functionally, provides the (R)-glutamate required for cell wall biosynthesis. The polypeptide is Glutamate racemase (Yersinia pseudotuberculosis serotype I (strain IP32953)).